Reading from the N-terminus, the 974-residue chain is Isoleucine--tRNA ligase (974 aa).

The 'HIGH' region motif lies at 69 to 79 (PYANGALHMGH). Position 585 (E585) interacts with L-isoleucyl-5'-AMP. Residues 626–630 (KMSKS) carry the 'KMSKS' region motif. An ATP-binding site is contributed by K629. Zn(2+) is bound by residues C939, C942, C959, and C962.

It belongs to the class-I aminoacyl-tRNA synthetase family. IleS type 1 subfamily. As to quaternary structure, monomer. It depends on Zn(2+) as a cofactor.

The protein resides in the cytoplasm. The enzyme catalyses tRNA(Ile) + L-isoleucine + ATP = L-isoleucyl-tRNA(Ile) + AMP + diphosphate. In terms of biological role, catalyzes the attachment of isoleucine to tRNA(Ile). As IleRS can inadvertently accommodate and process structurally similar amino acids such as valine, to avoid such errors it has two additional distinct tRNA(Ile)-dependent editing activities. One activity is designated as 'pretransfer' editing and involves the hydrolysis of activated Val-AMP. The other activity is designated 'posttransfer' editing and involves deacylation of mischarged Val-tRNA(Ile). This chain is Isoleucine--tRNA ligase, found in Parasynechococcus marenigrum (strain WH8102).